A 356-amino-acid polypeptide reads, in one-letter code: MKRELLLEKIEEYKSLMPWFVLEYYQSKLSVPYSFTTLYEYLKEYKRFFNWLIDSGISDADDIASIHIKTLENLTKKDMESFVLYLRERPSLNTYSKKQGVSQTTINRTLSALSSLYKYLTEEVEGPDGEPYFYRNVMKKISTKKKKETLAARAENIKQKLFLGDETMKFLDYVENEYEVKLSNRAKSSFYKNKERDLAIIALLLSSGVRLSEAVNLDLKDINLKMMVIDVTRKGGQRDSVNMASFARPYLENYLSIRNKRYKAEKQDVALFLTEYRGVPNRIDASSIEKMVGKYSQDFKIRVTPHKLRHTLATRLYDATKSQVLVSHQLGHASTQVTDLYTHIVNDEQKNALDNL.

The region spanning Leu-16 to Thr-121 is the Core-binding (CB) domain. In terms of domain architecture, Tyr recombinase spans Lys-169–Asp-354. Catalysis depends on residues Arg-210, Lys-234, His-306, Arg-309, and His-332. Residue Tyr-341 is the O-(3'-phospho-DNA)-tyrosine intermediate of the active site.

Belongs to the 'phage' integrase family. XerS subfamily.

Its subcellular location is the cytoplasm. FtsK is required for recombination. Site-specific tyrosine recombinase, which acts by catalyzing the cutting and rejoining of the recombining DNA molecules. Essential to convert dimers of the bacterial chromosome into monomers to permit their segregation at cell division. The protein is Tyrosine recombinase XerS of Streptococcus thermophilus (strain ATCC BAA-491 / LMD-9).